Reading from the N-terminus, the 93-residue chain is Co-chaperonin GroES (93 aa).

This sequence belongs to the GroES chaperonin family. Heptamer of 7 subunits arranged in a ring. Interacts with the chaperonin GroEL.

The protein resides in the cytoplasm. In terms of biological role, together with the chaperonin GroEL, plays an essential role in assisting protein folding. The GroEL-GroES system forms a nano-cage that allows encapsulation of the non-native substrate proteins and provides a physical environment optimized to promote and accelerate protein folding. GroES binds to the apical surface of the GroEL ring, thereby capping the opening of the GroEL channel. The protein is Co-chaperonin GroES of Streptococcus anginosus.